Consider the following 373-residue polypeptide: Carboxylesterase/phospholipase LipF (373 aa).

The Involved in the stabilization of the negatively charged intermediate by the formation of the oxyanion hole signature appears at His116–Gly118. Active-site residues include Ser186, Glu285, and His315.

This sequence belongs to the 'GDXG' lipolytic enzyme family.

The catalysed reaction is a carboxylic ester + H2O = an alcohol + a carboxylate + H(+). It carries out the reaction a 1,2-diacyl-sn-glycero-3-phosphocholine + H2O = phosphocholine + a 1,2-diacyl-sn-glycerol + H(+). Its function is as follows. A short-chain esterase and phospholipase. The protein is Carboxylesterase/phospholipase LipF of Mycobacterium tuberculosis (strain CDC 1551 / Oshkosh).